A 501-amino-acid polypeptide reads, in one-letter code: Ribose import ATP-binding protein RbsA (501 aa).

2 ABC transporter domains span residues 5–241 (LQLK…VGRK) and 252–495 (APGD…VGKL). Position 37 to 44 (37 to 44 (GENGAGKS)) interacts with ATP.

The protein belongs to the ABC transporter superfamily. Ribose importer (TC 3.A.1.2.1) family. The complex is composed of an ATP-binding protein (RbsA), two transmembrane proteins (RbsC) and a solute-binding protein (RbsB).

It localises to the cell inner membrane. The catalysed reaction is D-ribose(out) + ATP + H2O = D-ribose(in) + ADP + phosphate + H(+). Functionally, part of the ABC transporter complex RbsABC involved in ribose import. Responsible for energy coupling to the transport system. The protein is Ribose import ATP-binding protein RbsA of Escherichia coli (strain K12).